The following is a 153-amino-acid chain: uncharacterized protein (153 aa).

A run of 2 helical transmembrane segments spans residues 1 to 21 and 106 to 126; these read MAAT…LFFS and IVPI…TVYI.

It localises to the membrane. This is an uncharacterized protein from Saccharomyces cerevisiae (strain ATCC 204508 / S288c) (Baker's yeast).